A 290-amino-acid chain; its full sequence is Acetylglutamate kinase (290 aa).

Substrate is bound by residues 65–66 (GG), arginine 87, and asparagine 186.

The protein belongs to the acetylglutamate kinase family. ArgB subfamily.

Its subcellular location is the cytoplasm. The catalysed reaction is N-acetyl-L-glutamate + ATP = N-acetyl-L-glutamyl 5-phosphate + ADP. It functions in the pathway amino-acid biosynthesis; L-arginine biosynthesis; N(2)-acetyl-L-ornithine from L-glutamate: step 2/4. Catalyzes the ATP-dependent phosphorylation of N-acetyl-L-glutamate. This Mycobacterium sp. (strain JLS) protein is Acetylglutamate kinase.